The following is a 152-amino-acid chain: Xanthine-guanine phosphoribosyltransferase (152 aa).

5-phospho-alpha-D-ribose 1-diphosphate is bound by residues 37–38, Arg-69, and 88–96; these read RG and DDLVDTGGT. Arg-69 provides a ligand contact to GMP. Mg(2+) is bound at residue Asp-89. Residues Asp-92 and Ile-135 each coordinate guanine. Residues Asp-92 and Ile-135 each coordinate xanthine. GMP is bound by residues 92 to 96 and 134 to 135; these read DTGGT and WI.

This sequence belongs to the purine/pyrimidine phosphoribosyltransferase family. XGPT subfamily. As to quaternary structure, homotetramer. It depends on Mg(2+) as a cofactor.

It is found in the cell inner membrane. The enzyme catalyses GMP + diphosphate = guanine + 5-phospho-alpha-D-ribose 1-diphosphate. It carries out the reaction XMP + diphosphate = xanthine + 5-phospho-alpha-D-ribose 1-diphosphate. It catalyses the reaction IMP + diphosphate = hypoxanthine + 5-phospho-alpha-D-ribose 1-diphosphate. It functions in the pathway purine metabolism; GMP biosynthesis via salvage pathway; GMP from guanine: step 1/1. The protein operates within purine metabolism; XMP biosynthesis via salvage pathway; XMP from xanthine: step 1/1. In terms of biological role, purine salvage pathway enzyme that catalyzes the transfer of the ribosyl-5-phosphate group from 5-phospho-alpha-D-ribose 1-diphosphate (PRPP) to the N9 position of the 6-oxopurines guanine and xanthine to form the corresponding ribonucleotides GMP (guanosine 5'-monophosphate) and XMP (xanthosine 5'-monophosphate), with the release of PPi. To a lesser extent, also acts on hypoxanthine. In Shigella boydii serotype 18 (strain CDC 3083-94 / BS512), this protein is Xanthine-guanine phosphoribosyltransferase.